The chain runs to 284 residues: 2-dehydro-3-deoxyphosphooctonate aldolase (284 aa).

The protein belongs to the KdsA family.

It is found in the cytoplasm. It carries out the reaction D-arabinose 5-phosphate + phosphoenolpyruvate + H2O = 3-deoxy-alpha-D-manno-2-octulosonate-8-phosphate + phosphate. Its pathway is carbohydrate biosynthesis; 3-deoxy-D-manno-octulosonate biosynthesis; 3-deoxy-D-manno-octulosonate from D-ribulose 5-phosphate: step 2/3. The protein operates within bacterial outer membrane biogenesis; lipopolysaccharide biosynthesis. The protein is 2-dehydro-3-deoxyphosphooctonate aldolase of Aliivibrio salmonicida (strain LFI1238) (Vibrio salmonicida (strain LFI1238)).